A 188-amino-acid polypeptide reads, in one-letter code: Elongation factor P (188 aa).

Belongs to the elongation factor P family.

The protein resides in the cytoplasm. It functions in the pathway protein biosynthesis; polypeptide chain elongation. Functionally, involved in peptide bond synthesis. Stimulates efficient translation and peptide-bond synthesis on native or reconstituted 70S ribosomes in vitro. Probably functions indirectly by altering the affinity of the ribosome for aminoacyl-tRNA, thus increasing their reactivity as acceptors for peptidyl transferase. The protein is Elongation factor P (efp) of Rickettsia conorii (strain ATCC VR-613 / Malish 7).